We begin with the raw amino-acid sequence, 422 residues long: Lactose-binding protein (422 aa).

A signal peptide spans 1-28 (MDYSRLLKRSVSAALTAAALLCSTAAFA). The interval 246 to 277 (SNDGIRALTSGDVASVLRGVWITGTVKSQPDQ) is lactose-binding.

It belongs to the bacterial solute-binding protein 1 family.

It is found in the periplasm. Its function is as follows. Part of the binding-protein-dependent transport system for lactose. This chain is Lactose-binding protein (lacE), found in Rhizobium radiobacter (Agrobacterium tumefaciens).